We begin with the raw amino-acid sequence, 481 residues long: Glycosyl hydrolase family 109 protein 1 (481 aa).

The tat-type signal signal peptide spans 1–29 (MDNSSSRRRFLQTLGLATGALAAGSFANA). Residues 84 to 85 (ER), Asp-106, 155 to 158 (WEWH), 175 to 176 (EV), and Asn-204 contribute to the NAD(+) site. Substrate contacts are provided by residues Tyr-233, Arg-252, 264–267 (YPTH), and Tyr-347. An NAD(+)-binding site is contributed by Tyr-264.

This sequence belongs to the Gfo/Idh/MocA family. Glycosyl hydrolase 109 subfamily. The cofactor is NAD(+). Post-translationally, predicted to be exported by the Tat system. The position of the signal peptide cleavage has not been experimentally proven.

Glycosidase. This is Glycosyl hydrolase family 109 protein 1 from Akkermansia muciniphila (strain ATCC BAA-835 / DSM 22959 / JCM 33894 / BCRC 81048 / CCUG 64013 / CIP 107961 / Muc).